Here is a 247-residue protein sequence, read N- to C-terminus: Proteasome subunit alpha (247 aa).

This sequence belongs to the peptidase T1A family. In terms of assembly, the 20S proteasome core is composed of 14 alpha and 14 beta subunits that assemble into four stacked heptameric rings, resulting in a barrel-shaped structure. The two inner rings, each composed of seven catalytic beta subunits, are sandwiched by two outer rings, each composed of seven alpha subunits. The catalytic chamber with the active sites is on the inside of the barrel. Has a gated structure, the ends of the cylinder being occluded by the N-termini of the alpha-subunits. Is capped at one or both ends by the proteasome regulatory ATPase, PAN.

It is found in the cytoplasm. Its activity is regulated as follows. The formation of the proteasomal ATPase PAN-20S proteasome complex, via the docking of the C-termini of PAN into the intersubunit pockets in the alpha-rings, triggers opening of the gate for substrate entry. Interconversion between the open-gate and close-gate conformations leads to a dynamic regulation of the 20S proteasome proteolysis activity. Component of the proteasome core, a large protease complex with broad specificity involved in protein degradation. This is Proteasome subunit alpha from Methanosarcina acetivorans (strain ATCC 35395 / DSM 2834 / JCM 12185 / C2A).